Here is a 293-residue protein sequence, read N- to C-terminus: Putative ribose uptake protein RbsU (293 aa).

10 helical membrane passes run 5–24 (AILI…TIAS), 34–51 (IFGA…LALF), 58–80 (GGMA…IITF), 95–114 (TTAF…LGNW), 121–138 (IIGF…RMTV), 153–170 (SAVI…IYSA), 177–199 (IGGF…IYAL), 212–234 (VSWQ…LISA), 241–263 (LATG…IFFL), and 273–292 (MITI…TVFI).

This sequence belongs to the GRP transporter (TC 2.A.7.5) family.

It localises to the cell membrane. Its function is as follows. Could be involved in the uptake of ribose. This is Putative ribose uptake protein RbsU (rbsU) from Staphylococcus epidermidis (strain ATCC 35984 / DSM 28319 / BCRC 17069 / CCUG 31568 / BM 3577 / RP62A).